Here is a 1138-residue protein sequence, read N- to C-terminus: Transmembrane channel-like protein 3 (1138 aa).

The segment covering 1-15 (MEAAPGTAAAAAKPA) has biased composition (low complexity). 2 disordered regions span residues 1–20 (MEAA…SCKK) and 29–54 (NIYT…DSQD). The Cytoplasmic segment spans residues 1-155 (MEAAPGTAAA…VASYFIFLRW (155 aa)). The helical transmembrane segment at 156-176 (LFGINIVLTIMTGAFVVLPEL) threads the bilayer. At 177 to 202 (LAGAPFGSTVSKTIRQEDLKTAQDLD) the chain is on the extracellular side. A helical membrane pass occupies residues 203–223 (TIWSLGGYLQYSVLFYGYYGS). At 224 to 233 (DRKIGKAGYR) the chain is on the cytoplasmic side. Residues 234-254 (LPLAYFLVGMAVFAYSFIILL) traverse the membrane as a helical segment. Residues 255-327 (KKMAKNSRMS…KNLAVTISLR (73 aa)) lie on the Extracellular side of the membrane. A glycan (N-linked (GlcNAc...) asparagine) is linked at Asn272. Residues 328 to 348 (IIANILVLLSLTGSIYIIYFV) form a helical membrane-spanning segment. Residues 349-369 (VDRSQKLENNKRELTLWEKNE) lie on the Cytoplasmic side of the membrane. A helical transmembrane segment spans residues 370 to 390 (VSVVVSLITMIAPSAFELVAA). Over 391-401 (LEMYHPRTTLR) the chain is Extracellular. A helical membrane pass occupies residues 402 to 422 (FQLARVLVLYLGNLYSLIIAL). Topologically, residues 423-508 (LDKVNSMSVT…CWETYVGQEM (86 aa)) are cytoplasmic. Residues 509–529 (LKLSIIDMIFTVASILLIDFF) traverse the membrane as a helical segment. Residues 530 to 569 (RGLCVRYLSDCWCWDLESKFPEYGEFKIAENVLHLVYNQG) are Extracellular-facing. The helical transmembrane segment at 570-590 (MIWMGAFFSPCLPAFNVLKLI) threads the bilayer. The Cytoplasmic segment spans residues 591-618 (GLMYLRSWAVLTCNVPHQQVFRASRSNN). A helical transmembrane segment spans residues 619-639 (FYLAMLLFMLFLCMLPTIFAI). The Extracellular portion of the chain corresponds to 640 to 676 (ARYKPSLSCGPFSGQEKIYDIVSETIQNDFPAWFNSV). Residues 677–697 (IAYISSPVVVLPALLLLFMLI) form a helical membrane-spanning segment. Residues 698–1138 (YYLQSIARSL…EPNELVCSNV (441 aa)) lie on the Cytoplasmic side of the membrane. Polar residues predominate over residues 753 to 763 (NSEGTRFQSLD). 3 disordered regions span residues 753–859 (NSEG…RYPS), 973–1005 (SPHP…DLRP), and 1065–1095 (PKTK…SSND). Positions 764–773 (GSDKRPDKDG) are enriched in basic and acidic residues. Composition is skewed to polar residues over residues 777 to 795 (SQES…SVLN) and 804 to 813 (TRIQTISQTV). Residues 828–845 (TTPTTSASLTPAPSVSSA) are compositionally biased toward low complexity. Residues 989 to 998 (HYVKRSHRPR) are compositionally biased toward basic residues. The segment covering 1074–1095 (SLTESDSVSIESSSDPQNSSND) has biased composition (low complexity).

The protein belongs to the TMC family. In terms of tissue distribution, expressed in a range of tissues including cerebrum, cerebellum, retina, cochlea, lung, liver and heart. Also expressed in the apical, medial and basal portions of the basillar papilla.

Its subcellular location is the membrane. Probable component of an ion channel. The chain is Transmembrane channel-like protein 3 from Gallus gallus (Chicken).